The following is a 339-amino-acid chain: Anthranilate phosphoribosyltransferase (339 aa).

5-phospho-alpha-D-ribose 1-diphosphate-binding positions include G81, 84–85, 91–94, 109–117, and S121; these read GD, NIST, and KHGNRAASS. G81 provides a ligand contact to anthranilate. S93 serves as a coordination point for Mg(2+). An anthranilate-binding site is contributed by N112. Position 167 (R167) interacts with anthranilate. Residues D226 and E227 each contribute to the Mg(2+) site.

This sequence belongs to the anthranilate phosphoribosyltransferase family. As to quaternary structure, homodimer. Mg(2+) is required as a cofactor.

The catalysed reaction is N-(5-phospho-beta-D-ribosyl)anthranilate + diphosphate = 5-phospho-alpha-D-ribose 1-diphosphate + anthranilate. The protein operates within amino-acid biosynthesis; L-tryptophan biosynthesis; L-tryptophan from chorismate: step 2/5. Functionally, catalyzes the transfer of the phosphoribosyl group of 5-phosphorylribose-1-pyrophosphate (PRPP) to anthranilate to yield N-(5'-phosphoribosyl)-anthranilate (PRA). The protein is Anthranilate phosphoribosyltransferase of Maricaulis maris (strain MCS10) (Caulobacter maris).